Reading from the N-terminus, the 186-residue chain is Peptidyl-tRNA hydrolase (186 aa).

Residue tyrosine 16 coordinates tRNA. The active-site Proton acceptor is the histidine 21. TRNA-binding residues include tyrosine 66, asparagine 68, and asparagine 114.

The protein belongs to the PTH family. In terms of assembly, monomer.

It is found in the cytoplasm. It catalyses the reaction an N-acyl-L-alpha-aminoacyl-tRNA + H2O = an N-acyl-L-amino acid + a tRNA + H(+). Hydrolyzes ribosome-free peptidyl-tRNAs (with 1 or more amino acids incorporated), which drop off the ribosome during protein synthesis, or as a result of ribosome stalling. Its function is as follows. Catalyzes the release of premature peptidyl moieties from peptidyl-tRNA molecules trapped in stalled 50S ribosomal subunits, and thus maintains levels of free tRNAs and 50S ribosomes. This chain is Peptidyl-tRNA hydrolase, found in Ureaplasma urealyticum serovar 10 (strain ATCC 33699 / Western).